The primary structure comprises 458 residues: Peptidyl-prolyl cis-trans isomerase FKBP4 (458 aa).

Methionine 1 is modified (N-acetylmethionine; in peptidyl-prolyl cis-trans isomerase FKBP4; alternate). Threonine 2 carries the post-translational modification N-acetylthreonine; in peptidyl-prolyl cis-trans isomerase FKBP4, N-terminally processed; partial. The PPIase FKBP-type 1 domain occupies 50–138 (GDRVFVHYTG…VFEVELFEFK (89 aa)). Threonine 143 is subject to Phosphothreonine; by CK2. Residues 167 to 253 (GAMVEVALEG…RYEVHLKSFE (87 aa)) form the PPIase FKBP-type 2 domain. The residue at position 220 (tyrosine 220) is a Phosphotyrosine. The interval 267–400 (LEQSNIVKER…TQLAVCQQRT (134 aa)) is interaction with tubulin. TPR repeat units lie at residues 270-303 (SNIVKERGTVYFKEGKYKQALLQYKKIVSWLEYE), 319-352 (LASHLNLAMCHLKLQAFSAAIESCNKALELDSNN), and 353-386 (EKGLFRRGEAHLAVNDFDLARADFQKVLQLYPSN). N6-acetyllysine is present on lysine 282. Position 373 is an omega-N-methylarginine (arginine 373). Residues 423-458 (HKAKTEVAAGDHPTDAEMKGEPNNVAGNQAQVKTEA) are disordered. Threonine 436 is modified (phosphothreonine). Lysine 441 participates in a covalent cross-link: Glycyl lysine isopeptide (Lys-Gly) (interchain with G-Cter in SUMO1). The segment covering 447–458 (VAGNQAQVKTEA) has biased composition (polar residues).

As to quaternary structure, homodimer. Interacts with GLMN. Associates with HSP90AA1 and HSP70 in steroid hormone receptor complexes. Also interacts with peroxisomal phytanoyl-CoA alpha-hydroxylase (PHYH). Interacts with NR3C1 and dynein. Interacts with HSF1 in the HSP90 complex. Associates with tubulin. Interacts with MAPT/TAU. Interacts (via TPR domain) with S100A1, S100A2 and S100A6; the interaction is Ca(2+) dependent. Interaction with S100A1 and S100A2 (but not with S100A6) leads to inhibition of FKBP4-HSP90 interaction. Interacts with dynein; causes partially NR3C1 transport to the nucleus. Post-translationally, phosphorylation by CK2 results in loss of HSP90 binding activity. In terms of tissue distribution, widely detected in the brain (at protein level).

It localises to the cytoplasm. The protein localises to the cytosol. The protein resides in the mitochondrion. Its subcellular location is the nucleus. It is found in the cytoskeleton. It localises to the cell projection. The protein localises to the axon. The catalysed reaction is [protein]-peptidylproline (omega=180) = [protein]-peptidylproline (omega=0). Its activity is regulated as follows. Inhibited by FK506. Immunophilin protein with PPIase and co-chaperone activities. Component of unligated steroid receptors heterocomplexes through interaction with heat-shock protein 90 (HSP90). Plays a role in the intracellular trafficking of heterooligomeric forms of steroid hormone receptors between cytoplasm and nuclear compartments. May have a protective role against oxidative stress in mitochondria. Also acts as a regulator of microtubule dynamics by inhibiting MAPT/TAU ability to promote microtubule assembly. The PPIase activity controls neuronal growth cones via regulation of TRPC1 channel opening. The sequence is that of Peptidyl-prolyl cis-trans isomerase FKBP4 (Fkbp4) from Rattus norvegicus (Rat).